The following is a 271-amino-acid chain: Ribosomal RNA small subunit methyltransferase A (271 aa).

The S-adenosyl-L-methionine site is built by Asn-28, Leu-30, Gly-54, Glu-75, Asp-99, and Asn-117.

It belongs to the class I-like SAM-binding methyltransferase superfamily. rRNA adenine N(6)-methyltransferase family. RsmA subfamily.

Its subcellular location is the cytoplasm. It carries out the reaction adenosine(1518)/adenosine(1519) in 16S rRNA + 4 S-adenosyl-L-methionine = N(6)-dimethyladenosine(1518)/N(6)-dimethyladenosine(1519) in 16S rRNA + 4 S-adenosyl-L-homocysteine + 4 H(+). In terms of biological role, specifically dimethylates two adjacent adenosines (A1518 and A1519) in the loop of a conserved hairpin near the 3'-end of 16S rRNA in the 30S particle. May play a critical role in biogenesis of 30S subunits. This Thermus thermophilus (strain ATCC BAA-163 / DSM 7039 / HB27) protein is Ribosomal RNA small subunit methyltransferase A.